Here is a 489-residue protein sequence, read N- to C-terminus: Beta-1,3-glucosyltransferase (489 aa).

Position 1 (Met-1) is a topological domain, cytoplasmic. Residues 2-22 (RPPALLALFSCSAAFALMSEE) traverse the membrane as a helical; Signal-anchor for type II membrane protein segment. Residues 23–489 (IKEKVTPSQD…ETQKDPREEL (467 aa)) lie on the Lumenal side of the membrane. The N-linked (GlcNAc...) asparagine glycan is linked to Asn-78. A Prevents secretion from ER motif is present at residues 486-489 (REEL).

Belongs to the glycosyltransferase 31 family.

It localises to the endoplasmic reticulum membrane. Its pathway is protein modification; protein glycosylation. Functionally, O-glucosyltransferase that transfers glucose toward fucose with a beta-1,3 linkage. Specifically glucosylates O-linked fucosylglycan on TSP type-1 domains of proteins, thereby contributing to elongation of O-fucosylglycan. This Mus musculus (Mouse) protein is Beta-1,3-glucosyltransferase.